The following is a 227-amino-acid chain: Cytochrome c oxidase subunit 2 (227 aa).

Residues 1-14 lie on the Mitochondrial intermembrane side of the membrane; it reads MAYPMQLGFQDATS. The helical transmembrane segment at 15 to 45 threads the bilayer; sequence PIMEELLHFHDHTLMIVFLISSLVLYIISLM. The Mitochondrial matrix segment spans residues 46-59; that stretch reads LTTKLTHTSTMDAQ. A helical membrane pass occupies residues 60–87; sequence EVETVWTILPAVILIMIALPSLRILYMM. Over 88–227 the chain is Mitochondrial intermembrane; the sequence is DEINNPSLTV…HFEKWSASML (140 aa). Residues His-161, Cys-196, Glu-198, Cys-200, His-204, and Met-207 each coordinate Cu cation. Glu-198 contributes to the Mg(2+) binding site.

This sequence belongs to the cytochrome c oxidase subunit 2 family. Component of the cytochrome c oxidase (complex IV, CIV), a multisubunit enzyme composed of 14 subunits. The complex is composed of a catalytic core of 3 subunits MT-CO1, MT-CO2 and MT-CO3, encoded in the mitochondrial DNA, and 11 supernumerary subunits COX4I, COX5A, COX5B, COX6A, COX6B, COX6C, COX7A, COX7B, COX7C, COX8 and NDUFA4, which are encoded in the nuclear genome. The complex exists as a monomer or a dimer and forms supercomplexes (SCs) in the inner mitochondrial membrane with NADH-ubiquinone oxidoreductase (complex I, CI) and ubiquinol-cytochrome c oxidoreductase (cytochrome b-c1 complex, complex III, CIII), resulting in different assemblies (supercomplex SCI(1)III(2)IV(1) and megacomplex MCI(2)III(2)IV(2)). Found in a complex with TMEM177, COA6, COX18, COX20, SCO1 and SCO2. Interacts with TMEM177 in a COX20-dependent manner. Interacts with COX20. Interacts with COX16. The cofactor is Cu cation.

Its subcellular location is the mitochondrion inner membrane. The catalysed reaction is 4 Fe(II)-[cytochrome c] + O2 + 8 H(+)(in) = 4 Fe(III)-[cytochrome c] + 2 H2O + 4 H(+)(out). In terms of biological role, component of the cytochrome c oxidase, the last enzyme in the mitochondrial electron transport chain which drives oxidative phosphorylation. The respiratory chain contains 3 multisubunit complexes succinate dehydrogenase (complex II, CII), ubiquinol-cytochrome c oxidoreductase (cytochrome b-c1 complex, complex III, CIII) and cytochrome c oxidase (complex IV, CIV), that cooperate to transfer electrons derived from NADH and succinate to molecular oxygen, creating an electrochemical gradient over the inner membrane that drives transmembrane transport and the ATP synthase. Cytochrome c oxidase is the component of the respiratory chain that catalyzes the reduction of oxygen to water. Electrons originating from reduced cytochrome c in the intermembrane space (IMS) are transferred via the dinuclear copper A center (CU(A)) of subunit 2 and heme A of subunit 1 to the active site in subunit 1, a binuclear center (BNC) formed by heme A3 and copper B (CU(B)). The BNC reduces molecular oxygen to 2 water molecules using 4 electrons from cytochrome c in the IMS and 4 protons from the mitochondrial matrix. The polypeptide is Cytochrome c oxidase subunit 2 (MT-CO2) (Tragelaphus imberbis (Lesser kudu)).